Here is a 367-residue protein sequence, read N- to C-terminus: Dual-specificity RNA methyltransferase RlmN (367 aa).

The active-site Proton acceptor is the glutamate 91. The 236-residue stretch at 102–337 folds into the Radical SAM core domain; it reads GKVRMTQCLS…AIIRKSKGQD (236 aa). Residues cysteine 109 and cysteine 342 are joined by a disulfide bond. The [4Fe-4S] cluster site is built by cysteine 116, cysteine 120, and cysteine 123. S-adenosyl-L-methionine is bound by residues 169-170, serine 201, 223-225, and asparagine 299; these read GE and SLH. The active-site S-methylcysteine intermediate is cysteine 342.

It belongs to the radical SAM superfamily. RlmN family. Requires [4Fe-4S] cluster as cofactor.

The protein localises to the cytoplasm. It catalyses the reaction adenosine(2503) in 23S rRNA + 2 reduced [2Fe-2S]-[ferredoxin] + 2 S-adenosyl-L-methionine = 2-methyladenosine(2503) in 23S rRNA + 5'-deoxyadenosine + L-methionine + 2 oxidized [2Fe-2S]-[ferredoxin] + S-adenosyl-L-homocysteine. The enzyme catalyses adenosine(37) in tRNA + 2 reduced [2Fe-2S]-[ferredoxin] + 2 S-adenosyl-L-methionine = 2-methyladenosine(37) in tRNA + 5'-deoxyadenosine + L-methionine + 2 oxidized [2Fe-2S]-[ferredoxin] + S-adenosyl-L-homocysteine. Specifically methylates position 2 of adenine 2503 in 23S rRNA and position 2 of adenine 37 in tRNAs. m2A2503 modification seems to play a crucial role in the proofreading step occurring at the peptidyl transferase center and thus would serve to optimize ribosomal fidelity. In Nitratidesulfovibrio vulgaris (strain DSM 19637 / Miyazaki F) (Desulfovibrio vulgaris), this protein is Dual-specificity RNA methyltransferase RlmN.